Reading from the N-terminus, the 135-residue chain is Immunity protein RhsIA (135 aa).

Residues 58 to 77 (RKQGRQISLSCGEPPEYSPD) form a disordered region.

Immunity component of a toxin-immunity protein module, which functions as a cellular contact-dependent growth inhibition (CDI) system. Specifically inhibits its cognate toxin RhsA. Cell contact is necessary for growth inhibition. The chain is Immunity protein RhsIA (rhsIA) from Dickeya dadantii (strain 3937) (Erwinia chrysanthemi (strain 3937)).